Consider the following 562-residue polypeptide: Matrix metalloproteinase-25 (562 aa).

Residues 1 to 21 (MRLRLRLLALLLLLLAPPARA) form the signal peptide. The propeptide occupies 22–107 (PKPSAQDVSL…VAGLVRRRRR (86 aa)). A Cysteine switch motif is present at residues 88 to 95 (PRCSLPDV). Zn(2+)-binding residues include cysteine 90 and histidine 233. Residue glutamate 234 is part of the active site. 2 residues coordinate Zn(2+): histidine 237 and histidine 243. The interval 278–313 (LYGKAPQTPYDKPTRKPLAPPPQPPASPTHSPSFPI) is disordered. Pro residues predominate over residues 295 to 304 (LAPPPQPPAS). 4 Hemopexin repeats span residues 314–363 (PDRC…WEGL), 367–412 (VRVV…GLPP), 413–461 (GEEV…EGAP), and 462–508 (PSPD…WLDC). A disulfide bridge links cysteine 317 with cysteine 508. The disordered stretch occupies residues 490-526 (SIKTEPDAPQPMGPNWLDCPAPSSGPRAPRPPKATPV). Alanine 539 is lipidated: GPI-anchor amidated alanine. The propeptide at 540 to 562 (AGRWPAPIPLLLLPLLVGGVASR) is removed in mature form.

This sequence belongs to the peptidase M10A family. The cofactor is Zn(2+). Ca(2+) is required as a cofactor. In terms of processing, the precursor is cleaved by a furin endopeptidase. As to expression, expressed predominantly in leukocytes, lung and spleen. Expressed also in colon carcinoma, astrocytoma and glioblastomas.

It localises to the cell membrane. Its subcellular location is the secreted. It is found in the extracellular space. The protein resides in the extracellular matrix. Its function is as follows. May activate progelatinase A. The sequence is that of Matrix metalloproteinase-25 (MMP25) from Homo sapiens (Human).